The primary structure comprises 148 residues: MATTAVTLKDVCPQEFIATYARFLKKTGRVQIPKWNDIAKTATYRELPPTNPDWIYYRIATLARKVYIRGGDGVATYRRVFGGNRRNGVRPNHFADVNGGNIRYCLKQLQNLKVIETDAVKGGRTITATGRRDLDRIAKQIYDKKNKI.

The protein belongs to the eukaryotic ribosomal protein eS19 family.

The chain is Small ribosomal subunit protein eS19 (rps19) from Dictyostelium discoideum (Social amoeba).